The primary structure comprises 503 residues: Maturase K (503 aa).

It belongs to the intron maturase 2 family. MatK subfamily.

The protein resides in the plastid. It localises to the chloroplast. Usually encoded in the trnK tRNA gene intron. Probably assists in splicing its own and other chloroplast group II introns. The protein is Maturase K of Rosa foetida (Austrian briar).